Reading from the N-terminus, the 95-residue chain is Opiscorpine-3 (95 aa).

A signal peptide spans 1–19; the sequence is MNNKLTALIFLGLLAIASC. Residues 55–95 form the BetaSPN-type CS-alpha/beta domain; it reads EFMCVANVDMTKSCDTHCQKASGEKGYCHGTKCKCGVPLSY. 3 disulfide bridges follow: Cys-58–Cys-82, Cys-68–Cys-87, and Cys-72–Cys-89.

The protein belongs to the long chain scorpion toxin family. Class 3 subfamily. In terms of tissue distribution, expressed by the venom gland.

Its subcellular location is the secreted. Its function is as follows. Has antimicrobial activity against yeasts and bacteria. This chain is Opiscorpine-3, found in Opistophthalmus carinatus (African yellow leg scorpion).